Here is a 320-residue protein sequence, read N- to C-terminus: Lipoyl synthase (320 aa).

The disordered stretch occupies residues 1–29; it reads MVTVVDRVTNRRLRHPEKAHRPDTSVQKK. Residues 19-29 are compositionally biased toward basic and acidic residues; sequence AHRPDTSVQKK. [4Fe-4S] cluster contacts are provided by Cys59, Cys64, Cys70, Cys85, Cys89, Cys92, and Ser298. The Radical SAM core domain maps to 71–287; it reads WSQRHASFMI…AKIGKVKGFL (217 aa).

Belongs to the radical SAM superfamily. Lipoyl synthase family. [4Fe-4S] cluster serves as cofactor.

It is found in the cytoplasm. It catalyses the reaction [[Fe-S] cluster scaffold protein carrying a second [4Fe-4S](2+) cluster] + N(6)-octanoyl-L-lysyl-[protein] + 2 oxidized [2Fe-2S]-[ferredoxin] + 2 S-adenosyl-L-methionine + 4 H(+) = [[Fe-S] cluster scaffold protein] + N(6)-[(R)-dihydrolipoyl]-L-lysyl-[protein] + 4 Fe(3+) + 2 hydrogen sulfide + 2 5'-deoxyadenosine + 2 L-methionine + 2 reduced [2Fe-2S]-[ferredoxin]. Its pathway is protein modification; protein lipoylation via endogenous pathway; protein N(6)-(lipoyl)lysine from octanoyl-[acyl-carrier-protein]: step 2/2. In terms of biological role, catalyzes the radical-mediated insertion of two sulfur atoms into the C-6 and C-8 positions of the octanoyl moiety bound to the lipoyl domains of lipoate-dependent enzymes, thereby converting the octanoylated domains into lipoylated derivatives. This is Lipoyl synthase from Bartonella tribocorum (strain CIP 105476 / IBS 506).